The following is a 473-amino-acid chain: Mitochondrial distribution and morphology protein 10 (473 aa).

Belongs to the MDM10 family. As to quaternary structure, component of the ER-mitochondria encounter structure (ERMES) or MDM complex, composed of MMM1, MDM10, MDM12 and MDM34. Associates with the mitochondrial outer membrane sorting assembly machinery SAM(core) complex.

The protein localises to the mitochondrion outer membrane. Component of the ERMES/MDM complex, which serves as a molecular tether to connect the endoplasmic reticulum and mitochondria. Components of this complex are involved in the control of mitochondrial shape and protein biogenesis and may function in phospholipid exchange. MDM10 is involved in the late assembly steps of the general translocase of the mitochondrial outer membrane (TOM complex). Functions in the TOM40-specific route of the assembly of outer membrane beta-barrel proteins, including the association of TOM40 with the receptor TOM22 and small TOM proteins. Can associate with the SAM(core) complex as well as the MDM12-MMM1 complex, both involved in late steps of the major beta-barrel assembly pathway, that is responsible for biogenesis of all outer membrane beta-barrel proteins. May act as a switch that shuttles between both complexes and channels precursor proteins into the TOM40-specific pathway. Plays a role in mitochondrial morphology and in the inheritance of mitochondria. The sequence is that of Mitochondrial distribution and morphology protein 10 from Candida albicans (strain WO-1) (Yeast).